The chain runs to 251 residues: tRNA (guanine-N(1)-)-methyltransferase (251 aa).

S-adenosyl-L-methionine is bound by residues Gly113 and 133-138 (MGDYVL).

This sequence belongs to the RNA methyltransferase TrmD family. In terms of assembly, homodimer.

It localises to the cytoplasm. It carries out the reaction guanosine(37) in tRNA + S-adenosyl-L-methionine = N(1)-methylguanosine(37) in tRNA + S-adenosyl-L-homocysteine + H(+). Its function is as follows. Specifically methylates guanosine-37 in various tRNAs. This chain is tRNA (guanine-N(1)-)-methyltransferase, found in Sodalis glossinidius (strain morsitans).